A 287-amino-acid polypeptide reads, in one-letter code: ATP synthase gamma chain (287 aa).

Belongs to the ATPase gamma chain family. F-type ATPases have 2 components, CF(1) - the catalytic core - and CF(0) - the membrane proton channel. CF(1) has five subunits: alpha(3), beta(3), gamma(1), delta(1), epsilon(1). CF(0) has three main subunits: a, b and c.

It localises to the cell inner membrane. Functionally, produces ATP from ADP in the presence of a proton gradient across the membrane. The gamma chain is believed to be important in regulating ATPase activity and the flow of protons through the CF(0) complex. In Klebsiella pneumoniae (strain 342), this protein is ATP synthase gamma chain.